The sequence spans 418 residues: Tyrosine--tRNA ligase (418 aa).

Tyr-38 serves as a coordination point for L-tyrosine. The 'HIGH' region motif lies at 43–52 (CTARSLHIGS). L-tyrosine is bound by residues Tyr-175 and Gln-179. Positions 235–239 (KMGKT) match the 'KMSKS' region motif. Position 238 (Lys-238) interacts with ATP. Residues 348–413 (LSVVKLLQVS…CGKKRHLKVV (66 aa)) form the S4 RNA-binding domain.

It belongs to the class-I aminoacyl-tRNA synthetase family. TyrS type 1 subfamily. In terms of assembly, homodimer.

It localises to the cytoplasm. It carries out the reaction tRNA(Tyr) + L-tyrosine + ATP = L-tyrosyl-tRNA(Tyr) + AMP + diphosphate + H(+). Functionally, catalyzes the attachment of tyrosine to tRNA(Tyr) in a two-step reaction: tyrosine is first activated by ATP to form Tyr-AMP and then transferred to the acceptor end of tRNA(Tyr). This Ehrlichia ruminantium (strain Welgevonden) protein is Tyrosine--tRNA ligase.